Here is a 931-residue protein sequence, read N- to C-terminus: Histone-lysine N-methyltransferase EZ1 (931 aa).

A compositionally biased stretch (low complexity) spans 1–30; it reads MEAEAAAAVVASSASASASAGRSRPSSSAA. Disordered stretches follow at residues 1–37, 372–450, and 491–549; these read MEAEAAAAVVASSASASASAGRSRPSSSAAQVTSNSA, PTHS…ITNR, and RNGN…YDSS. A compositionally biased stretch (polar residues) spans 375-385; it reads SSDNVMNQPGS. The span at 386–398 shows a compositional bias: basic residues; the sequence is NRKKNGSSGRKTK. The segment covering 423-433 has biased composition (polar residues); sequence SNKSPQHSPSP. The segment covering 500–509 has biased composition (low complexity); sequence SSQQSSPSTR. The span at 528-549 shows a compositional bias: basic and acidic residues; it reads AHNDSTEEANNRHSATDGYDSS. Positions 565-615 constitute an SANT domain; the sequence is YLRSWKAIEQGLLVKGLEIFGRNSCLIARNLLGGMKTCKDVFQYMNYIENN. In terms of domain architecture, CXC spans 664–763; the sequence is FKRITERKDQ…TLGVPNQRGD (100 aa). The 116-residue stretch at 778 to 893 folds into the SET domain; the sequence is QRVLLGRSDV…AGEELFYDYR (116 aa). Residues 903-915 show a composition bias toward basic and acidic residues; sequence ARKPEASGAKDDG. The disordered stretch occupies residues 903 to 931; it reads ARKPEASGAKDDGQPFNGRAKKLAQNNRG.

It belongs to the class V-like SAM-binding methyltransferase superfamily. Histone-lysine methyltransferase family. EZ subfamily. In terms of tissue distribution, widely expressed.

It is found in the nucleus. The catalysed reaction is L-lysyl(27)-[histone H3] + 3 S-adenosyl-L-methionine = N(6),N(6),N(6)-trimethyl-L-lysyl(27)-[histone H3] + 3 S-adenosyl-L-homocysteine + 3 H(+). Functionally, polycomb group (PcG) protein. Catalytic subunit of some PcG multiprotein complex, which methylates 'Lys-27' of histone H3, leading to transcriptional repression of the affected target genes. PcG proteins are not required to initiate repression, but to maintain it during later stages of development. This chain is Histone-lysine N-methyltransferase EZ1 (EZ1), found in Zea mays (Maize).